An 88-amino-acid polypeptide reads, in one-letter code: Serine protease inhibitor Kazal-type 11 (88 aa).

The signal sequence occupies residues 1–24; it reads MSSTWIKFLFILTLVLLPYFVAES. The 56-residue stretch at 32–87 folds into the Kazal-like domain; that stretch reads LRKVPNCTLYKSESDCSRTLIPVCADNQMTYYNACYFCLEQLVSPIKYKYHGICTK. Asparagine 37 carries an N-linked (GlcNAc...) asparagine glycan. 3 disulfides stabilise this stretch: cysteine 38-cysteine 69, cysteine 47-cysteine 66, and cysteine 55-cysteine 85.

Expressed in epydiymis, in the caput. Also expressed in seminal vesicles.

It localises to the secreted. Its function is as follows. Probable serine protease inhibitor. The polypeptide is Serine protease inhibitor Kazal-type 11 (Spink11) (Mus musculus (Mouse)).